The primary structure comprises 218 residues: 4-coumaroyl-homoserine lactone synthase (218 aa).

The protein belongs to the autoinducer synthase family.

It carries out the reaction 4-coumaroyl-CoA + S-adenosyl-L-methionine = N-(4-coumaroyl)-L-homoserine lactone + S-methyl-5'-thioadenosine + CoA + H(+). In terms of biological role, catalyzes the synthesis of 4-coumaroyl-homoserine lactone, a quorum-sensing (QS) autoinducer molecule which binds to RpaR transcriptional regulator to regulate expression of QS-dependent genes. This Rhodopseudomonas palustris (strain ATCC BAA-98 / CGA009) protein is 4-coumaroyl-homoserine lactone synthase.